A 346-amino-acid polypeptide reads, in one-letter code: Phosphate acyltransferase (346 aa).

It belongs to the PlsX family. In terms of assembly, homodimer. Probably interacts with PlsY.

The protein localises to the cytoplasm. It carries out the reaction a fatty acyl-[ACP] + phosphate = an acyl phosphate + holo-[ACP]. The protein operates within lipid metabolism; phospholipid metabolism. In terms of biological role, catalyzes the reversible formation of acyl-phosphate (acyl-PO(4)) from acyl-[acyl-carrier-protein] (acyl-ACP). This enzyme utilizes acyl-ACP as fatty acyl donor, but not acyl-CoA. The polypeptide is Phosphate acyltransferase (Psychromonas ingrahamii (strain DSM 17664 / CCUG 51855 / 37)).